Consider the following 133-residue polypeptide: Small ribosomal subunit protein uS8 (133 aa).

The protein belongs to the universal ribosomal protein uS8 family. As to quaternary structure, part of the 30S ribosomal subunit. Contacts proteins S5 and S12.

Functionally, one of the primary rRNA binding proteins, it binds directly to 16S rRNA central domain where it helps coordinate assembly of the platform of the 30S subunit. This Prochlorococcus marinus (strain AS9601) protein is Small ribosomal subunit protein uS8.